A 295-amino-acid polypeptide reads, in one-letter code: Ribosomal protein L11 methyltransferase (295 aa).

S-adenosyl-L-methionine-binding residues include Thr-139, Gly-166, Asp-188, and Asn-231.

This sequence belongs to the methyltransferase superfamily. PrmA family.

The protein localises to the cytoplasm. It catalyses the reaction L-lysyl-[protein] + 3 S-adenosyl-L-methionine = N(6),N(6),N(6)-trimethyl-L-lysyl-[protein] + 3 S-adenosyl-L-homocysteine + 3 H(+). Functionally, methylates ribosomal protein L11. The sequence is that of Ribosomal protein L11 methyltransferase from Cyanothece sp. (strain PCC 7425 / ATCC 29141).